A 445-amino-acid polypeptide reads, in one-letter code: UPF0210 protein SUB1511 (445 aa).

It belongs to the UPF0210 family. In terms of assembly, homodimer.

The chain is UPF0210 protein SUB1511 from Streptococcus uberis (strain ATCC BAA-854 / 0140J).